A 486-amino-acid polypeptide reads, in one-letter code: Elastin-binding protein EbpS (486 aa).

Residues 1 to 40 (MSNNFKDDFEKNRQSIDTNSHQDHTEDVEKDQSELEHQDT) are compositionally biased toward basic and acidic residues. Residues 1-314 (MSNNFKDDFE…NHDRDKERKK (314 aa)) are disordered. Over 2 to 204 (SNNFKDDFEK…ESKDHHSGKK (203 aa)) the chain is Extracellular. Residues 14–34 (QSIDTNSHQDHTEDVEKDQSE) are elastin-binding. The segment covering 64 to 85 (TNHNKQVHNESQTSEDNVQNEA) has biased composition (polar residues). Basic and acidic residues-rich tracts occupy residues 103 to 118 (EPSH…EEYY) and 126 to 149 (DKSH…ENNT). A compositionally biased stretch (polar residues) spans 150–166 (EHSTVSDKSIAEQSQQP). Residues 180 to 199 (SKDKHDDVTVKQDKDESKDH) are compositionally biased toward basic and acidic residues. Low complexity-rich tracts occupy residues 204 to 225 (KGAA…MGVS) and 233 to 246 (DAQN…SNNS). The chain crosses the membrane as a helical span at residues 205–225 (GAAIGAGTAGVAGAAGAMGVS). The Cytoplasmic segment spans residues 226-319 (KAKKHSNDAQ…KERKKGGMAK (94 aa)). Residues 247–259 (TEDKASQDKSKDH) are compositionally biased toward basic and acidic residues. A compositionally biased stretch (low complexity) spans 278–297 (GAASKSASAASKPHASNNAS). Positions 299-314 (NHDEHDNHDRDKERKK) are enriched in basic and acidic residues. The helical transmembrane segment at 320–340 (VLLPLIAAVLIIGALAIFGGM) threads the bilayer. Topologically, residues 341-486 (ALNNHNNGTK…IRNGQQIVIP (146 aa)) are extracellular. The interval 351 to 440 (ENKIANTNKN…QRQGGGQRHT (90 aa)) is disordered. Over residues 361-398 (NADESKDKDTSKDASKDKSKSTDSDKSKEDQDKATKDE) the composition is skewed to basic and acidic residues. The span at 403 to 431 (QNNANQANNQAQNNQNQQQANQNQQQQQQ) shows a compositional bias: low complexity. Positions 437–485 (QRHTVNGQENLYRIAIQYYGSGSPENVEKIRRANGLSGNNIRNGQQIVI) constitute a LysM domain.

Its subcellular location is the cell membrane. Its function is as follows. Promotes binding of soluble elastin peptides and tropoelastin to S.aureus cells although it is not able to promote bacterial adherence to immobilized elastin and, therefore, is not a microbial surface component recognizing adhesive matrix molecule (MSCRAMM). This is Elastin-binding protein EbpS (ebpS) from Staphylococcus aureus (strain Mu50 / ATCC 700699).